A 554-amino-acid chain; its full sequence is Urocanate hydratase (554 aa).

NAD(+) is bound by residues 49–50, Q127, 173–175, E193, R198, 239–240, 260–264, 270–271, and Y319; these read GG, GMG, NA, QTSAH, and YI. The active site involves C407. G489 provides a ligand contact to NAD(+).

This sequence belongs to the urocanase family. It depends on NAD(+) as a cofactor.

It localises to the cytoplasm. It carries out the reaction 4-imidazolone-5-propanoate = trans-urocanate + H2O. Its pathway is amino-acid degradation; L-histidine degradation into L-glutamate; N-formimidoyl-L-glutamate from L-histidine: step 2/3. Functionally, catalyzes the conversion of urocanate to 4-imidazolone-5-propionate. The protein is Urocanate hydratase of Bacillus velezensis (strain DSM 23117 / BGSC 10A6 / LMG 26770 / FZB42) (Bacillus amyloliquefaciens subsp. plantarum).